The chain runs to 175 residues: CDP-archaeol synthase (175 aa).

4 helical membrane passes run 41–61 (GFFV…QLLE), 82–102 (TILI…MSFF), 122–142 (FVLG…AEQF), and 147–167 (IAVI…VGYF).

This sequence belongs to the CDP-archaeol synthase family. Mg(2+) is required as a cofactor.

The protein resides in the cell membrane. The catalysed reaction is 2,3-bis-O-(geranylgeranyl)-sn-glycerol 1-phosphate + CTP + H(+) = CDP-2,3-bis-O-(geranylgeranyl)-sn-glycerol + diphosphate. The protein operates within membrane lipid metabolism; glycerophospholipid metabolism. Catalyzes the formation of CDP-2,3-bis-(O-geranylgeranyl)-sn-glycerol (CDP-archaeol) from 2,3-bis-(O-geranylgeranyl)-sn-glycerol 1-phosphate (DGGGP) and CTP. This reaction is the third ether-bond-formation step in the biosynthesis of archaeal membrane lipids. The sequence is that of CDP-archaeol synthase from Methanococcoides burtonii (strain DSM 6242 / NBRC 107633 / OCM 468 / ACE-M).